The sequence spans 396 residues: Na(+)/H(+) antiporter NhaA (396 aa).

11 helical membrane-spanning segments follow: residues 17 to 37 (FSGLLLILFCFLAIFISNTNF), 59 to 79 (FSLTNIVNDILMTFFFLEIGI), 97 to 117 (ILPGIAAIGGMIFPALIYNFI), 127 to 147 (GWAITVATDIAFAVGVLKILG), 156 to 176 (IFLLSLAIFDDIGAILIIAFF), 181 to 201 (IDQYMILLSTLVILTILSINY), 206 to 226 (CIYIYIIFGILLWESIFLSGI), 260 to 280 (SLSFLNKYFILPIFAFFNSGI), 292 to 312 (LLPFGIFFGLVLGKPIGVFLF), 333 to 353 (IAGISFLCGIGFTMSIFISNL), and 368 to 388 (FSILISSIVSSVIGFLFLYFL).

The protein belongs to the NhaA Na(+)/H(+) (TC 2.A.33) antiporter family.

Its subcellular location is the cell membrane. It catalyses the reaction Na(+)(in) + 2 H(+)(out) = Na(+)(out) + 2 H(+)(in). Na(+)/H(+) antiporter that extrudes sodium in exchange for external protons. In Wigglesworthia glossinidia brevipalpis, this protein is Na(+)/H(+) antiporter NhaA.